The chain runs to 549 residues: Longitudinals lacking protein, isoforms H/M/V (549 aa).

One can recognise a BTB domain in the interval 32–97; it reads VDCTLAAEGK…MYRGEVNISQ (66 aa). 2 disordered regions span residues 115–200 and 228–340; these read LSDN…SSVL and SSGP…ASAS. Low complexity-rich tracts occupy residues 162–175, 228–251, 263–293, and 329–340; these read SGDV…SSSP, SSGP…LTST, TSST…QTTS, and NSATGPNPASAS.

As to expression, mostly neuronal.

It localises to the nucleus. In terms of biological role, putative transcription factor required for axon growth and guidance in the central and peripheral nervous systems. Repels CNS axons away from the midline by promoting the expression of the midline repellent sli and its receptor robo. The polypeptide is Longitudinals lacking protein, isoforms H/M/V (Drosophila melanogaster (Fruit fly)).